We begin with the raw amino-acid sequence, 396 residues long: Corticosteroid-binding globulin (396 aa).

The N-terminal stretch at 1 to 22 (MSLALYTCLLWLCTSGLWTAQA) is a signal peptide. 2 N-linked (GlcNAc...) asparagine glycosylation sites follow: Asn88 and Asn216. Gln246 lines the cortisol pocket. An N-linked (GlcNAc...) asparagine glycan is attached at Asn252. Position 278 (Asp278) interacts with cortisol. 2 N-linked (GlcNAc...) asparagine glycosylation sites follow: Asn319 and Asn352. A cortisol-binding site is contributed by Trp384.

Belongs to the serpin family. In terms of tissue distribution, expressed by the liver; secreted in plasma.

The protein localises to the secreted. Functionally, major transport protein for glucocorticoids and progestins in the blood of almost all vertebrate species. The sequence is that of Corticosteroid-binding globulin (Serpina6) from Rattus norvegicus (Rat).